The chain runs to 694 residues: E3 ubiquitin-protein ligase RNF169 (694 aa).

Low complexity-rich tracts occupy residues Met1 to Ser20 and Ala33 to Ala46. The segment at Met1–Ala46 is disordered. Ser12 carries the post-translational modification Phosphoserine. The RING-type zinc-finger motif lies at Cys61–Arg97. A disordered region spans residues Gly100 to Glu153. The segment covering Met119 to Gly137 has biased composition (basic and acidic residues). The UMI motif signature appears at Asp192 to Gln200. 2 positions are modified to phosphoserine: Ser234 and Ser236. Residue Lys273 forms a Glycyl lysine isopeptide (Lys-Gly) (interchain with G-Cter in SUMO2) linkage. Ser326 carries the phosphoserine modification. Lys349 participates in a covalent cross-link: Glycyl lysine isopeptide (Lys-Gly) (interchain with G-Cter in SUMO2). Phosphoserine is present on residues Ser390 and Ser396. Thr397 carries the phosphothreonine modification. Ser472 bears the Phosphoserine mark. Residue Lys498 forms a Glycyl lysine isopeptide (Lys-Gly) (interchain with G-Cter in SUMO2) linkage. The disordered stretch occupies residues Thr515–Glu537. Phosphothreonine is present on Thr541. A Phosphoserine modification is found at Ser630. An MIU motif motif is present at residues Gln651–Ser668. The LR motif signature appears at Arg675 to Ser687. The residue at position 679 (Ser679) is a Phosphoserine.

Belongs to the RNF169 family. In terms of assembly, interacts with DYRK1B. In terms of processing, phosphorylated by DYRK1A; phosphorylation increases RNF169 ability to block accumulation of TP53BP1 at the DSB sites.

It is found in the chromosome. The protein resides in the nucleus. Its subcellular location is the nucleoplasm. The catalysed reaction is S-ubiquitinyl-[E2 ubiquitin-conjugating enzyme]-L-cysteine + [acceptor protein]-L-lysine = [E2 ubiquitin-conjugating enzyme]-L-cysteine + N(6)-ubiquitinyl-[acceptor protein]-L-lysine.. It functions in the pathway protein modification; protein ubiquitination. Functionally, probable E3 ubiquitin-protein ligase that acts as a regulator of double-strand breaks (DSBs) repair following DNA damage. Functions in a non-canonical fashion to harness RNF168-mediated protein recruitment to DSB-containing chromatin, thereby contributing to regulation of DSB repair pathway utilization. Once recruited to DSB repair sites by recognizing and binding ubiquitin catalyzed by RNF168, competes with TP53BP1 and BRCA1 for association with RNF168-modified chromatin, thereby favouring homologous recombination repair (HRR) and single-strand annealing (SSA) instead of non-homologous end joining (NHEJ) mediated by TP53BP1. E3 ubiquitin-protein ligase activity is not required for regulation of DSBs repair. The chain is E3 ubiquitin-protein ligase RNF169 (Rnf169) from Mus musculus (Mouse).